The chain runs to 704 residues: Ankyrin repeat and LEM domain-containing protein 1 homolog (704 aa).

Positions 1–29 (MPPNGAITTTPRSRMPPTTPSSGKSRPKK) are disordered. Positions 8–22 (TTTPRSRMPPTTPSS) are enriched in low complexity. ANK repeat units follow at residues 28–59 (KKET…NVNA) and 63–93 (DGAT…PMSA). Disordered regions lie at residues 247-293 (NEDV…SQET), 314-358 (NAGL…ANTT), and 381-421 (SKSA…TTVD). Residues 276–288 (RKQRTPVNHHKRS) are compositionally biased toward basic residues. Composition is skewed to low complexity over residues 329–346 (EPAI…TPKT) and 384–405 (AKSS…SFSS). An LEM domain is found at 425-470 (IRKIRRLREGELKSELKKFGISPAGPLDARTRRLYEKKLLIERRKI). In terms of domain architecture, GIY-YIG spans 525–635 (YNAFCYLIMD…AVKLKNLRNK (111 aa)).

In terms of processing, phosphorylated. Phosphorylated during telophase when localized at the midbody.

It localises to the cytoplasm. Its subcellular location is the nucleus. The protein localises to the chromosome. It is found in the midbody. The protein resides in the cytoskeleton. It localises to the spindle. Its activity is regulated as follows. Inhibited by EDTA. Functionally, endonuclease which, in association with baf-1, plays an essential role during embryogenesis in the DNA repair response following DNA damage probably by ensuring proper chromosome segregation. Also required during postembryonic cell divisions after DNA damage caused by ionizing radiation to ensure normal cell proliferation. Resolves chromatin bridges in late mitosis that result from incomplete DNA replication, defective chromosome condensation or unresolved recombination intermediates. Together with brc-1, contributes to genome integrity by resolving mitotic chromatin bridges that result from incomplete processing of DNA breaks. In parallel to the slx-1/mus-81 pathway, acts in processing early recombination intermediates in meiotic prophase I to prevent illegitimate recombination. Also involved in processing remaining, erroneous recombination intermediates that persist into the second meiotic division. The protein is Ankyrin repeat and LEM domain-containing protein 1 homolog of Caenorhabditis elegans.